The following is a 752-amino-acid chain: Catalase-peroxidase (752 aa).

The tract at residues 1–20 is disordered; the sequence is MENELVSKVKAPVPGNQTNT. Residues 111–234 constitute a cross-link (tryptophyl-tyrosyl-methioninium (Trp-Tyr) (with M-260)); the sequence is WHSAGTYRIG…LGAVQMGLIY (124 aa). The active-site Proton acceptor is histidine 112. Positions 234-260 form a cross-link, tryptophyl-tyrosyl-methioninium (Tyr-Met) (with W-111); the sequence is YVNPEGPNGKPDPAAAAVDIRETFARM. Histidine 275 serves as a coordination point for heme b.

The protein belongs to the peroxidase family. Peroxidase/catalase subfamily. Homodimer or homotetramer. Requires heme b as cofactor. In terms of processing, formation of the three residue Trp-Tyr-Met cross-link is important for the catalase, but not the peroxidase activity of the enzyme.

The catalysed reaction is H2O2 + AH2 = A + 2 H2O. It catalyses the reaction 2 H2O2 = O2 + 2 H2O. Functionally, bifunctional enzyme with both catalase and broad-spectrum peroxidase activity. This is Catalase-peroxidase from Koribacter versatilis (strain Ellin345).